We begin with the raw amino-acid sequence, 490 residues long: Glutamate--tRNA ligase (490 aa).

The 'HIGH' region motif lies at 10 to 20; it reads PSPTGRMHVGN. Residues Cys-109, Cys-111, Cys-140, and His-142 each contribute to the Zn(2+) site. A 'KMSKS' region motif is present at residues 257 to 261; that stretch reads KLSKR. Lys-260 provides a ligand contact to ATP.

Belongs to the class-I aminoacyl-tRNA synthetase family. Glutamate--tRNA ligase type 1 subfamily. In terms of assembly, monomer. Zn(2+) is required as a cofactor.

The protein localises to the cytoplasm. It carries out the reaction tRNA(Glu) + L-glutamate + ATP = L-glutamyl-tRNA(Glu) + AMP + diphosphate. Catalyzes the attachment of glutamate to tRNA(Glu) in a two-step reaction: glutamate is first activated by ATP to form Glu-AMP and then transferred to the acceptor end of tRNA(Glu). The polypeptide is Glutamate--tRNA ligase (Lachnoclostridium phytofermentans (strain ATCC 700394 / DSM 18823 / ISDg) (Clostridium phytofermentans)).